The following is a 159-amino-acid chain: Cyclic pyranopterin monophosphate synthase (159 aa).

Substrate is bound by residues 75–77 (LCH) and 113–114 (ME). Aspartate 128 is an active-site residue.

This sequence belongs to the MoaC family. As to quaternary structure, homohexamer; trimer of dimers.

The enzyme catalyses (8S)-3',8-cyclo-7,8-dihydroguanosine 5'-triphosphate = cyclic pyranopterin phosphate + diphosphate. It functions in the pathway cofactor biosynthesis; molybdopterin biosynthesis. Functionally, catalyzes the conversion of (8S)-3',8-cyclo-7,8-dihydroguanosine 5'-triphosphate to cyclic pyranopterin monophosphate (cPMP). This Vibrio atlanticus (strain LGP32) (Vibrio splendidus (strain Mel32)) protein is Cyclic pyranopterin monophosphate synthase.